We begin with the raw amino-acid sequence, 128 residues long: Glycine cleavage system H protein (128 aa).

Residues 24–105 (SLTIGVTDHA…AYAAWLFKLK (82 aa)) form the Lipoyl-binding domain. Lys-65 is subject to N6-lipoyllysine.

Belongs to the GcvH family. The glycine cleavage system is composed of four proteins: P, T, L and H. It depends on (R)-lipoate as a cofactor.

Its function is as follows. The glycine cleavage system catalyzes the degradation of glycine. The H protein shuttles the methylamine group of glycine from the P protein to the T protein. The polypeptide is Glycine cleavage system H protein (Aromatoleum aromaticum (strain DSM 19018 / LMG 30748 / EbN1) (Azoarcus sp. (strain EbN1))).